The primary structure comprises 241 residues: Protein TraL (241 aa).

It to plasmid IncP-alpha RP4 TraL.

The chain is Protein TraL (traL) from Escherichia coli.